Consider the following 513-residue polypeptide: Sterol 14-alpha demethylase (513 aa).

A helical membrane pass occupies residues 10-30 (FTLVSAYAAAGLLAIIVLNLL). N37 and N406 each carry an N-linked (GlcNAc...) asparagine glycan. Residue C453 participates in heme binding.

This sequence belongs to the cytochrome P450 family. Heme serves as cofactor.

The protein resides in the endoplasmic reticulum membrane. The enzyme catalyses a 14alpha-methyl steroid + 3 reduced [NADPH--hemoprotein reductase] + 3 O2 = a Delta(14) steroid + formate + 3 oxidized [NADPH--hemoprotein reductase] + 4 H2O + 4 H(+). The catalysed reaction is a 14alpha-methyl steroid + reduced [NADPH--hemoprotein reductase] + O2 = a 14alpha-hydroxymethyl steroid + oxidized [NADPH--hemoprotein reductase] + H2O + H(+). It carries out the reaction a 14alpha-hydroxymethyl steroid + reduced [NADPH--hemoprotein reductase] + O2 = a 14alpha-formyl steroid + oxidized [NADPH--hemoprotein reductase] + 2 H2O + H(+). It catalyses the reaction a 14alpha-formyl steroid + reduced [NADPH--hemoprotein reductase] + O2 = a Delta(14) steroid + formate + oxidized [NADPH--hemoprotein reductase] + H2O + 2 H(+). The enzyme catalyses lanosterol + 3 reduced [NADPH--hemoprotein reductase] + 3 O2 = 4,4-dimethyl-5alpha-cholesta-8,14,24-trien-3beta-ol + formate + 3 oxidized [NADPH--hemoprotein reductase] + 4 H2O + 4 H(+). The catalysed reaction is lanosterol + reduced [NADPH--hemoprotein reductase] + O2 = 32-hydroxylanosterol + oxidized [NADPH--hemoprotein reductase] + H2O + H(+). It carries out the reaction 32-hydroxylanosterol + reduced [NADPH--hemoprotein reductase] + O2 = 32-oxolanosterol + oxidized [NADPH--hemoprotein reductase] + 2 H2O + H(+). It catalyses the reaction 32-oxolanosterol + reduced [NADPH--hemoprotein reductase] + O2 = 4,4-dimethyl-5alpha-cholesta-8,14,24-trien-3beta-ol + formate + oxidized [NADPH--hemoprotein reductase] + H2O + 2 H(+). The enzyme catalyses eburicol + 3 reduced [NADPH--hemoprotein reductase] + 3 O2 = 14-demethyleburicol + formate + 3 oxidized [NADPH--hemoprotein reductase] + 4 H2O + 4 H(+). The catalysed reaction is eburicol + reduced [NADPH--hemoprotein reductase] + O2 = 32-hydroxyeburicol + oxidized [NADPH--hemoprotein reductase] + H2O + H(+). It carries out the reaction 32-hydroxyeburicol + reduced [NADPH--hemoprotein reductase] + O2 = 32-oxoeburicol + oxidized [NADPH--hemoprotein reductase] + 2 H2O + H(+). It catalyses the reaction 32-oxoeburicol + reduced [NADPH--hemoprotein reductase] + O2 = 14-demethyleburicol + formate + oxidized [NADPH--hemoprotein reductase] + H2O + 2 H(+). It participates in steroid biosynthesis; sterol biosynthesis. Sterol 14alpha-demethylase, encoded by cyp51A, cyp51B and cyp51C, that plays a critical role in the third module of ergosterol biosynthesis pathway, being ergosterol the major sterol component in fungal membranes that participates in a variety of functions. The third module or late pathway involves the ergosterol synthesis itself through consecutive reactions that mainly occur in the endoplasmic reticulum (ER) membrane. In filamentous fungi, during the initial step of this module, lanosterol (lanosta-8,24-dien-3beta-ol) can be metabolized to eburicol. Sterol 14alpha-demethylase catalyzes the three-step oxidative removal of the 14alpha-methyl group (C-32) of both these sterols in the form of formate, and converts eburicol and lanosterol to 14-demethyleburicol (4,4,24-trimethylergosta-8,14,24(28)-trienol) and 4,4-dimethyl-5alpha-cholesta-8,14,24-trien-3beta-ol, respectively, which are further metabolized by other enzymes in the pathway to ergosterol. Can also use substrates not intrinsic to fungi, such as 24,25-dihydrolanosterol (DHL), producing 4,4'-dimethyl-8,14-cholestadien-3-beta-ol, but at lower rates than the endogenous substrates. Functionally, as a target of azole drugs, plays a crucial role in azole susceptibility. In Aspergillus flavus (strain ATCC 200026 / FGSC A1120 / IAM 13836 / NRRL 3357 / JCM 12722 / SRRC 167), this protein is Sterol 14-alpha demethylase.